The following is a 758-amino-acid chain: Translation initiation factor IF-2 (758 aa).

The tract at residues 55–168 (EKNVGKQATQ…KTHQPSIPVK (114 aa)) is disordered. Polar residues-rich tracts occupy residues 60-78 (KQAT…QQNH) and 86-95 (QRQQSATSKP). A compositionally biased stretch (low complexity) spans 96 to 136 (KVNNQQHSNSSNEKSKNTKGNQNRNMTQNNNNNNNNNNNNR). One can recognise a tr-type G domain in the interval 259–428 (ERPPVVTIMG…LLVAEVGELK (170 aa)). A G1 region spans residues 268 to 275 (GHVDHGKT). Position 268–275 (268–275 (GHVDHGKT)) interacts with GTP. The segment at 293 to 297 (GITQH) is G2. The tract at residues 314–317 (DTPG) is G3. GTP-binding positions include 314–318 (DTPGH) and 368–371 (NKMD). The tract at residues 368 to 371 (NKMD) is G4. The segment at 404–406 (SAL) is G5.

Belongs to the TRAFAC class translation factor GTPase superfamily. Classic translation factor GTPase family. IF-2 subfamily.

The protein localises to the cytoplasm. Its function is as follows. One of the essential components for the initiation of protein synthesis. Protects formylmethionyl-tRNA from spontaneous hydrolysis and promotes its binding to the 30S ribosomal subunits. Also involved in the hydrolysis of GTP during the formation of the 70S ribosomal complex. The sequence is that of Translation initiation factor IF-2 from Lysinibacillus sphaericus (strain C3-41).